Consider the following 247-residue polypeptide: Sugar fermentation stimulation protein homolog (247 aa).

This sequence belongs to the SfsA family.

In Oleidesulfovibrio alaskensis (strain ATCC BAA-1058 / DSM 17464 / G20) (Desulfovibrio alaskensis), this protein is Sugar fermentation stimulation protein homolog.